The sequence spans 335 residues: Phosphate acyltransferase (335 aa).

This sequence belongs to the PlsX family. In terms of assembly, homodimer. Probably interacts with PlsY.

The protein resides in the cytoplasm. The catalysed reaction is a fatty acyl-[ACP] + phosphate = an acyl phosphate + holo-[ACP]. The protein operates within lipid metabolism; phospholipid metabolism. Catalyzes the reversible formation of acyl-phosphate (acyl-PO(4)) from acyl-[acyl-carrier-protein] (acyl-ACP). This enzyme utilizes acyl-ACP as fatty acyl donor, but not acyl-CoA. In Desulfitobacterium hafniense (strain Y51), this protein is Phosphate acyltransferase.